The following is a 499-amino-acid chain: Probable cytosol aminopeptidase (499 aa).

2 residues coordinate Mn(2+): Lys-267 and Asp-272. The active site involves Lys-279. Asp-290, Asp-349, and Glu-351 together coordinate Mn(2+). The active site involves Arg-353.

Belongs to the peptidase M17 family. The cofactor is Mn(2+).

Its subcellular location is the cytoplasm. It catalyses the reaction Release of an N-terminal amino acid, Xaa-|-Yaa-, in which Xaa is preferably Leu, but may be other amino acids including Pro although not Arg or Lys, and Yaa may be Pro. Amino acid amides and methyl esters are also readily hydrolyzed, but rates on arylamides are exceedingly low.. It carries out the reaction Release of an N-terminal amino acid, preferentially leucine, but not glutamic or aspartic acids.. Its function is as follows. Presumably involved in the processing and regular turnover of intracellular proteins. Catalyzes the removal of unsubstituted N-terminal amino acids from various peptides. This is Probable cytosol aminopeptidase from Buchnera aphidicola subsp. Acyrthosiphon pisum (strain Tuc7).